A 482-amino-acid polypeptide reads, in one-letter code: tRNA sulfurtransferase (482 aa).

Residues 61 to 165 (LAIRDALTRI…DDRLLLIKGR (105 aa)) enclose the THUMP domain. ATP-binding positions include 183-184 (LI), Lys265, Gly287, and Gln296. Cys344 and Cys456 are disulfide-bonded. In terms of domain architecture, Rhodanese spans 404 to 482 (FGPNDVILDI…GFNNVKVYRL (79 aa)). Cys456 serves as the catalytic Cysteine persulfide intermediate.

It belongs to the ThiI family.

The protein resides in the cytoplasm. The enzyme catalyses [ThiI sulfur-carrier protein]-S-sulfanyl-L-cysteine + a uridine in tRNA + 2 reduced [2Fe-2S]-[ferredoxin] + ATP + H(+) = [ThiI sulfur-carrier protein]-L-cysteine + a 4-thiouridine in tRNA + 2 oxidized [2Fe-2S]-[ferredoxin] + AMP + diphosphate. It catalyses the reaction [ThiS sulfur-carrier protein]-C-terminal Gly-Gly-AMP + S-sulfanyl-L-cysteinyl-[cysteine desulfurase] + AH2 = [ThiS sulfur-carrier protein]-C-terminal-Gly-aminoethanethioate + L-cysteinyl-[cysteine desulfurase] + A + AMP + 2 H(+). Its pathway is cofactor biosynthesis; thiamine diphosphate biosynthesis. Its function is as follows. Catalyzes the ATP-dependent transfer of a sulfur to tRNA to produce 4-thiouridine in position 8 of tRNAs, which functions as a near-UV photosensor. Also catalyzes the transfer of sulfur to the sulfur carrier protein ThiS, forming ThiS-thiocarboxylate. This is a step in the synthesis of thiazole, in the thiamine biosynthesis pathway. The sulfur is donated as persulfide by IscS. The protein is tRNA sulfurtransferase of Shigella boydii serotype 18 (strain CDC 3083-94 / BS512).